The sequence spans 325 residues: Hydroxymethylglutaryl-CoA lyase, mitochondrial (325 aa).

A mitochondrion-targeting transit peptide spans 1-27 (MASVRKAFPRRLVGLTSLRAVSTSSMG). The region spanning 33 to 300 (VKIVEVGPRD…HTGVNLQKLL (268 aa)) is the Pyruvate carboxyltransferase domain. Arg41 contributes to the substrate binding site. Position 42 (Asp42) interacts with a divalent metal cation. The residue at position 48 (Lys48) is an N6-acetyllysine; alternate. Position 48 is an N6-succinyllysine; alternate (Lys48). Lys111 is modified (N6-acetyllysine). Residues Lys137 and Lys179 each carry the N6-acetyllysine; alternate modification. Residues Lys137 and Lys179 each carry the N6-succinyllysine; alternate modification. Positions 233 and 235 each coordinate a divalent metal cation. The active site involves Cys266. Asn275 contacts a divalent metal cation. The Microbody targeting signal signature appears at 323-325 (CKL). At Lys324 the chain carries N6-acetyllysine.

It belongs to the HMG-CoA lyase family. Homodimer; disulfide-linked. Can also form homotetramers.

It localises to the mitochondrion matrix. The protein localises to the peroxisome. It catalyses the reaction (3S)-3-hydroxy-3-methylglutaryl-CoA = acetoacetate + acetyl-CoA. It functions in the pathway metabolic intermediate metabolism; (S)-3-hydroxy-3-methylglutaryl-CoA degradation; acetoacetate from (S)-3-hydroxy-3-methylglutaryl-CoA: step 1/1. Mitochondrial 3-hydroxy-3-methylglutaryl-CoA lyase that catalyzes a cation-dependent cleavage of (S)-3-hydroxy-3-methylglutaryl-CoA into acetyl-CoA and acetoacetate, a key step in ketogenesis. Terminal step in leucine catabolism. Ketone bodies (beta-hydroxybutyrate, acetoacetate and acetone) are essential as an alternative source of energy to glucose, as lipid precursors and as regulators of metabolism. The sequence is that of Hydroxymethylglutaryl-CoA lyase, mitochondrial (Hmgcl) from Mus musculus (Mouse).